We begin with the raw amino-acid sequence, 273 residues long: Sanguinarine reductase (273 aa).

The Proton donor role is filled by Ser-153. Residues Cys-157–His-161 and Lys-175 each bind substrate.

It belongs to the NAD(P)-dependent epimerase/dehydratase family. Monomer.

The catalysed reaction is dihydrosanguinarine + NADP(+) = sanguinarine + NADPH. It catalyses the reaction dihydrosanguinarine + NAD(+) = sanguinarine + NADH. It carries out the reaction dihydrochelirubine + NAD(+) = chelirubine + NADH. The enzyme catalyses dihydrochelirubine + NADP(+) = chelirubine + NADPH. With respect to regulation, inhibited by iodoacetamide and irreversibly by its product, dihydrosanguinarine. In terms of biological role, catalyzes the reduction of benzophenanthridines, preferentially sanguinarine, to the corresponding dihydroalkaloids. Involved in detoxifying the phytoalexins produced by plant itself. The sanguinarine produced by intact cells upon elicitation, after excretion and binding to cell wall elements, is rapidly reabsorbed and reduced to the less toxic dihydrosanguinarine. Can work with both NAD(P) or NAD as a hydrogen donor, but at low concentrations, the reaction velocity with NAD(P)H is threefold higher than with NADH. However, chelerythrine shows maximum conversion rates with NADH. The substrate preference is sanguinarine &gt; chelerythrine &gt; chelirubine, macarpine or 10-OH-chelerythrine. No activity with berberine or phenanthridine cations. This is Sanguinarine reductase from Eschscholzia californica (California poppy).